The sequence spans 621 residues: Chaperone protein HtpG (621 aa).

Positions 1–328 (MIQEKKKFDA…SEDLPLNISR (328 aa)) are a; substrate-binding. The b stretch occupies residues 329-544 (ESLQHNSVLE…DAAMDIRMER (216 aa)). The segment at 475–494 (SDIDVEQTTSQSEAKNTDSK) is disordered. Positions 545–621 (FLIEQKQIAN…LNDIVQKAIL (77 aa)) are c.

It belongs to the heat shock protein 90 family. As to quaternary structure, homodimer.

The protein resides in the cytoplasm. In terms of biological role, molecular chaperone. Has ATPase activity. The chain is Chaperone protein HtpG from Rickettsia rickettsii (strain Iowa).